An 85-amino-acid chain; its full sequence is Delta/kappa-theraphotoxin-Pm1a (85 aa).

An N-terminal signal peptide occupies residues 1-19 (MKTFVFIVLVALAFVLTAA). The propeptide occupies 20 to 43 (KEERANPSELVSALAELVMLDAER). 3 disulfide bridges follow: Cys-50/Cys-64, Cys-57/Cys-69, and Cys-63/Cys-77.

This sequence belongs to the neurotoxin 10 (Hwtx-1) family. Expressed by the venom gland.

The protein resides in the secreted. Multimodal toxin that enhances nociceptor excitability mainly by the simultaneous stimulation of repetitive firing (through Nav1.8/SCN10A channel current enhancement) and impairment of repolarization (by inhibiting delayed rectifier current of Kv2.1/KCNB1), with a potential contribution from tetrodotoxin-sensitive voltage-gated sodium channels (Nav) modified excitability. Enhances Nav1.8/SCN10A currents (EC(50)=1.1 uM), modifies the channel gating by a right-shift in steady-state inactivation and delays open-state inactivation. Also decreases Kv2.1/KCNB1 currents (IC(50)=0.43 uM) and causes a depolarizing shift in the voltage dependence of activation without change in steady-state inactivation. In addition, inhibits peak currents of human sodium channels (Nav1.1 to Nav1.7, IC(50)=0.38-2.3 uM) and delays fast inactivation of Nav1.1/SCN1A, Nav1.3/SCN3A, Nav1.6/SCN8A, and Nav1.7/SCN9A. In small dorsal root ganglion neurons, induces hyperexcitability by enhancing tetrodotoxin-resistant sodium currents, impairing repolarization and lowering the threshold of action potential firing, consistent with the severe pain associated with envenomation. In vivo, elicits nocifensive behavior in mice after intraplantar injection. This chain is Delta/kappa-theraphotoxin-Pm1a, found in Pelinobius muticus (King baboon spider).